A 24-amino-acid chain; its full sequence is Ascaphin-6 (24 aa).

Expressed by the skin glands.

It is found in the secreted. Functionally, antimicrobial peptide that shows higher potency against Gram-negative bacteria than against Gram-positive bacteria. Has a very week hemolytic activity. This is Ascaphin-6 from Ascaphus truei (Coastal tailed frog).